We begin with the raw amino-acid sequence, 456 residues long: uncharacterized protein (456 aa).

Helical transmembrane passes span 12 to 32, 63 to 83, 86 to 106, 143 to 163, 179 to 199, 208 to 228, 237 to 257, 305 to 325, 348 to 368, 390 to 410, and 414 to 434; these read SFIW…YLTL, FAAL…VGVA, VQAG…LGMA, WLAK…IGTF, IPVL…ILGG, SVIV…IILL, ILLI…AVGL, FLDT…TGAW, IGAT…ILGW, LAYI…IWII, and VNGL…KVII.

This sequence belongs to the alanine or glycine:cation symporter (AGCS) (TC 2.A.25) family.

The protein resides in the cell inner membrane. This is an uncharacterized protein from Haemophilus influenzae (strain ATCC 51907 / DSM 11121 / KW20 / Rd).